We begin with the raw amino-acid sequence, 85 residues long: MAHKKGQGSTQNNRDSIGRRLGVKKFGGEFVRAGNIIIRQRGTATHAGNNVGIGTDHTIFALIDGVVKFERFDKTRKQVSVYPLS.

This sequence belongs to the bacterial ribosomal protein bL27 family.

This is Large ribosomal subunit protein bL27 from Campylobacter hominis (strain ATCC BAA-381 / DSM 21671 / CCUG 45161 / LMG 19568 / NCTC 13146 / CH001A).